Reading from the N-terminus, the 434-residue chain is Tol-Pal system protein TolB (434 aa).

The signal sequence occupies residues 1–28 (MQQTCKRKIWMQISVALVTSLWMISAQA).

The protein belongs to the TolB family. As to quaternary structure, the Tol-Pal system is composed of five core proteins: the inner membrane proteins TolA, TolQ and TolR, the periplasmic protein TolB and the outer membrane protein Pal. They form a network linking the inner and outer membranes and the peptidoglycan layer.

The protein resides in the periplasm. Part of the Tol-Pal system, which plays a role in outer membrane invagination during cell division and is important for maintaining outer membrane integrity. This chain is Tol-Pal system protein TolB, found in Alcanivorax borkumensis (strain ATCC 700651 / DSM 11573 / NCIMB 13689 / SK2).